The chain runs to 610 residues: UvrABC system protein C (610 aa).

Positions threonine 12–isoleucine 91 constitute a GIY-YIG domain. One can recognise a UVR domain in the interval serine 202–leucine 237.

The protein belongs to the UvrC family. As to quaternary structure, interacts with UvrB in an incision complex.

It localises to the cytoplasm. Functionally, the UvrABC repair system catalyzes the recognition and processing of DNA lesions. UvrC both incises the 5' and 3' sides of the lesion. The N-terminal half is responsible for the 3' incision and the C-terminal half is responsible for the 5' incision. This chain is UvrABC system protein C, found in Koribacter versatilis (strain Ellin345).